The primary structure comprises 450 residues: Phosphoglucosamine mutase (450 aa).

S101 (phosphoserine intermediate) is an active-site residue. The Mg(2+) site is built by S101, D241, D243, and D245. S101 carries the phosphoserine modification.

The protein belongs to the phosphohexose mutase family. The cofactor is Mg(2+). In terms of processing, activated by phosphorylation.

It carries out the reaction alpha-D-glucosamine 1-phosphate = D-glucosamine 6-phosphate. In terms of biological role, catalyzes the conversion of glucosamine-6-phosphate to glucosamine-1-phosphate. The polypeptide is Phosphoglucosamine mutase (Listeria welshimeri serovar 6b (strain ATCC 35897 / DSM 20650 / CCUG 15529 / CIP 8149 / NCTC 11857 / SLCC 5334 / V8)).